Here is a 425-residue protein sequence, read N- to C-terminus: Intermediate conductance calcium-activated potassium channel protein 4 (425 aa).

Residues 30-50 (LVLAGTGIGLMVLHAEMLWFL) traverse the membrane as a helical segment. The chain crosses the membrane as a helical span at residues 59-79 (LLVKCLITLSTAFLLCLIVVF). Residues 105–121 (VAQILLELLVCGVHPVP) form a helical membrane-spanning segment. Residues 141–161 (GFLGEGEALLSLAMLLRLYLV) form a helical membrane-spanning segment. Residues 205–225 (LLLGLTLGLWLTTAWVLSVAE) traverse the membrane as a helical segment. Positions 239 to 259 (LWLIPITFLTIGYGDVVPGTL) form an intramembrane region, pore-forming. A helical membrane pass occupies residues 263–283 (IVCLCTGVMGVCCTALLVAVV). Residues 284–345 (ARKLEFNKAE…RRHQRKMLAA (62 aa)) form a calmodulin-binding region. Residue histidine 356 is modified to Phosphohistidine.

It belongs to the potassium channel KCNN family. KCa3.1/KCNN4 subfamily. Homodimer. Homotetramer. Heterotetramer of potassium channel proteins. Interacts with MTMR6; this interaction leads to selective dephosphorylation of PI(3)P in a lipid microdomain adjacent to KCNN4, resulting in a decrease of intermediate conductance calcium-activated potassium channel activity. Interacts (via the C-tail domain) with CALM1; the calmodulin binding is constitutive, does not require calcium and mediates calcium-dependent gating and four calmodulin molecules bind to one channel tetramer. Phosphorylation at His-356 by NDKB activates the intermediate conductance calcium-activated potassium channel activity, and conversely it's dephosphorylation by PHPT1 inhibits this activity.

Its subcellular location is the cell membrane. It localises to the cell projection. It is found in the ruffle membrane. The enzyme catalyses K(+)(in) = K(+)(out). Intermediate conductance calcium-activated potassium channel that mediates the voltage-independent transmembrane transfer of potassium across the cell membrane through a constitutive interaction with calmodulin which binds the intracellular calcium allowing its opening. The current is characterized by a voltage-independent activation, an intracellular calcium concentration increase-dependent activation and a single-channel conductance of about 25 picosiemens. Also presents an inwardly rectifying current, thus reducing its already small outward conductance of potassium ions, which is particularly the case when the membrane potential displays positive values, above + 20 mV. Controls calcium influx during vascular contractility by being responsible of membrane hyperpolarization induced by vasoactive factors in proliferative vascular smooth muscle cell types. Following calcium influx, the consecutive activation of KCNN4 channel leads to a hyperpolarization of the cell membrane potential and hence an increase of the electrical driving force for further calcium influx promoting sustained calcium entry in response to stimulation with chemotactic peptides. Required for maximal calcium influx and proliferation during the reactivation of naive T-cells. Plays a role in the late stages of EGF-induced macropinocytosis through activation by PI(3)P. This Rattus norvegicus (Rat) protein is Intermediate conductance calcium-activated potassium channel protein 4.